A 462-amino-acid chain; its full sequence is uncharacterized protein (462 aa).

The tract at residues Gln-405 to Val-462 is disordered. Residues Met-415–Asp-431 show a composition bias toward basic and acidic residues. Over residues Lys-443–Lys-453 the composition is skewed to basic residues.

This is an uncharacterized protein from Magallana gigas (Pacific oyster).